The following is a 524-amino-acid chain: Protein MGF 505-2R (524 aa).

Belongs to the asfivirus MGF 505 family.

Its function is as follows. Plays a role in virus cell tropism, and may be required for efficient virus replication in macrophages. The sequence is that of Protein MGF 505-2R from Ornithodoros (relapsing fever ticks).